We begin with the raw amino-acid sequence, 285 residues long: Shikimate dehydrogenase (NADP(+)) (285 aa).

Residues 19-21 (SLS) and Thr66 each bind shikimate. Residue Lys70 is the Proton acceptor of the active site. Residues Asn91 and Asp107 each coordinate shikimate. NADP(+) is bound by residues 129–133 (GSGGA) and Leu228. Tyr230 lines the shikimate pocket. Gly251 lines the NADP(+) pocket.

It belongs to the shikimate dehydrogenase family. As to quaternary structure, homodimer.

It carries out the reaction shikimate + NADP(+) = 3-dehydroshikimate + NADPH + H(+). It functions in the pathway metabolic intermediate biosynthesis; chorismate biosynthesis; chorismate from D-erythrose 4-phosphate and phosphoenolpyruvate: step 4/7. In terms of biological role, involved in the biosynthesis of the chorismate, which leads to the biosynthesis of aromatic amino acids. Catalyzes the reversible NADPH linked reduction of 3-dehydroshikimate (DHSA) to yield shikimate (SA). This is Shikimate dehydrogenase (NADP(+)) from Prochlorococcus marinus subsp. pastoris (strain CCMP1986 / NIES-2087 / MED4).